Here is a 101-residue protein sequence, read N- to C-terminus: Urease subunit beta (101 aa).

It belongs to the urease beta subunit family. In terms of assembly, heterotrimer of UreA (gamma), UreB (beta) and UreC (alpha) subunits. Three heterotrimers associate to form the active enzyme.

The protein resides in the cytoplasm. The enzyme catalyses urea + 2 H2O + H(+) = hydrogencarbonate + 2 NH4(+). The protein operates within nitrogen metabolism; urea degradation; CO(2) and NH(3) from urea (urease route): step 1/1. The polypeptide is Urease subunit beta (Rhodopseudomonas palustris (strain HaA2)).